Here is a 605-residue protein sequence, read N- to C-terminus: Poly(3-hydroxyalkanoate) polymerase (605 aa).

Positions 319–527 constitute an AB hydrolase-1 domain; sequence IETAIDMIGV…VLAGSGHIAG (209 aa). Residue Cys341 is part of the active site.

The protein belongs to the PHA/PHB synthase family.

The protein resides in the cytoplasm. The polypeptide is Poly(3-hydroxyalkanoate) polymerase (phaC) (Methylorubrum extorquens (Methylobacterium dichloromethanicum)).